Here is a 565-residue protein sequence, read N- to C-terminus: Urocanate hydratase (565 aa).

Residues G61–G62, Q139, G185–G187, E205, R210, N251–A252, Q272–H276, Y282–L283, and Y331 contribute to the NAD(+) site. The active site involves C419. The interval L453–S472 is disordered. The segment covering R463–S472 has biased composition (basic and acidic residues). G501 contributes to the NAD(+) binding site.

This sequence belongs to the urocanase family. The cofactor is NAD(+).

It is found in the cytoplasm. The enzyme catalyses 4-imidazolone-5-propanoate = trans-urocanate + H2O. It participates in amino-acid degradation; L-histidine degradation into L-glutamate; N-formimidoyl-L-glutamate from L-histidine: step 2/3. Its function is as follows. Catalyzes the conversion of urocanate to 4-imidazolone-5-propionate. This is Urocanate hydratase from Pseudomonas syringae pv. syringae (strain B728a).